Here is a 207-residue protein sequence, read N- to C-terminus: Large ribosomal subunit protein uL4 (207 aa).

The tract at residues 49-78 is disordered; sequence HAVKNRSAVSGGGRKPWRQKGTGRARQGSI.

Belongs to the universal ribosomal protein uL4 family. Part of the 50S ribosomal subunit.

Its function is as follows. One of the primary rRNA binding proteins, this protein initially binds near the 5'-end of the 23S rRNA. It is important during the early stages of 50S assembly. It makes multiple contacts with different domains of the 23S rRNA in the assembled 50S subunit and ribosome. Functionally, forms part of the polypeptide exit tunnel. The chain is Large ribosomal subunit protein uL4 from Streptococcus equi subsp. zooepidemicus (strain MGCS10565).